Reading from the N-terminus, the 234-residue chain is MTHPFVLLKWLIAKLHFGFSAEMLEQHGFFQHVTHTWLVMAILIGVGLLATHRAGLVPGGMQNFMELVLVEIRGMVRDTMGPKGMVYFPLIATLALFLLVSNLIGLIPGFAPPTASLNTNAALAVGVFLVTHIVGVREHGIRYFKHFMGPVWWLTPLILPIELIGHLARPLSLSLRLFGNMYGHEIVLMIFFSLVPLLLPIPMMLMGILVAFIQTFVFMLLSMIYIAGALEEAH.

The next 6 helical transmembrane spans lie at 29-49, 90-110, 116-136, 147-167, 186-206, and 207-227; these read FFQHVTHTWLVMAILIGVGLL, LIATLALFLLVSNLIGLIPGF, SLNTNAALAVGVFLVTHIVGV, FMGPVWWLTPLILPIELIGHL, IVLMIFFSLVPLLLPIPMMLM, and GILVAFIQTFVFMLLSMIYIA.

This sequence belongs to the ATPase A chain family. In terms of assembly, F-type ATPases have 2 components, CF(1) - the catalytic core - and CF(0) - the membrane proton channel. CF(1) has five subunits: alpha(3), beta(3), gamma(1), delta(1), epsilon(1). CF(0) has three main subunits: a(1), b(2) and c(9-12). The alpha and beta chains form an alternating ring which encloses part of the gamma chain. CF(1) is attached to CF(0) by a central stalk formed by the gamma and epsilon chains, while a peripheral stalk is formed by the delta and b chains.

The protein resides in the cell inner membrane. Key component of the proton channel; it plays a direct role in the translocation of protons across the membrane. The chain is ATP synthase subunit a 2 from Syntrophotalea carbinolica (strain DSM 2380 / NBRC 103641 / GraBd1) (Pelobacter carbinolicus).